A 435-amino-acid chain; its full sequence is GTPase Obg (435 aa).

The region spanning 1-159 (MAFIDKCKIV…IEVVLELKTI (159 aa)) is the Obg domain. In terms of domain architecture, OBG-type G spans 160-329 (ADIGIIGLPN…MLDDVIKIYF (170 aa)). GTP is bound by residues 166-173 (GLPNAGKS), 191-195 (FTTLN), 212-215 (DIPG), 282-285 (NKID), and 310-312 (SAL). Mg(2+) is bound by residues Ser-173 and Thr-193. Residues 355 to 435 (TPKNKELDKT…IYDITLEFEE (81 aa)) enclose the OCT domain.

It belongs to the TRAFAC class OBG-HflX-like GTPase superfamily. OBG GTPase family. In terms of assembly, monomer. The cofactor is Mg(2+).

The protein resides in the cytoplasm. Functionally, an essential GTPase which binds GTP, GDP and possibly (p)ppGpp with moderate affinity, with high nucleotide exchange rates and a fairly low GTP hydrolysis rate. Plays a role in control of the cell cycle, stress response, ribosome biogenesis and in those bacteria that undergo differentiation, in morphogenesis control. The sequence is that of GTPase Obg from Ureaplasma urealyticum serovar 10 (strain ATCC 33699 / Western).